A 270-amino-acid chain; its full sequence is Myeloid leukemia factor 1 (270 aa).

Serine 6, serine 8, serine 32, and serine 34 each carry phosphoserine. An interaction with COPS3 region spans residues 50-125 (RARNRMGHED…VGDEPPKVFQ (76 aa)). Disordered stretches follow at residues 127 to 148 (STQT…RDSD) and 221 to 247 (RSVA…AIEH). Over residues 138–148 (KETRKALRDSD) the composition is skewed to basic and acidic residues.

It belongs to the MLF family. Interacts with CENPU. Also interacts with NRBP1/MADM, YWHAZ/14-3-3-zeta and HNRPUL2/MANP. NRBP1 recruits a serine kinase which phosphorylates both itself and MLF1. Phosphorylated MLF1 then binds to YWHAZ and is retained in the cytoplasm. Retained in the nucleus by binding to HNRPUL2. Binds to COPS3/CSN3 which is required for suppression of COP1 and activation of p53. In terms of processing, phosphorylation is required for binding to YWHAZ.

Its subcellular location is the cytoplasm. The protein localises to the nucleus. It localises to the cell projection. The protein resides in the cilium. It is found in the cytoskeleton. Its subcellular location is the cilium basal body. Its function is as follows. Involved in lineage commitment of primary hemopoietic progenitors by restricting erythroid formation and enhancing myeloid formation. Interferes with erythropoietin-induced erythroid terminal differentiation by preventing cells from exiting the cell cycle through suppression of CDKN1B/p27Kip1 levels. Suppresses COP1 activity via CSN3 which activates p53 and induces cell cycle arrest. Binds DNA and affects the expression of a number of genes so may function as a transcription factor in the nucleus. The chain is Myeloid leukemia factor 1 (MLF1) from Bos taurus (Bovine).